Reading from the N-terminus, the 332-residue chain is Glycerol-3-phosphate dehydrogenase [NAD(P)+] (332 aa).

Positions 11, 12, 32, and 106 each coordinate NADPH. K106, G137, and S139 together coordinate sn-glycerol 3-phosphate. A141 provides a ligand contact to NADPH. Residues K192, D245, S255, R256, and N257 each contribute to the sn-glycerol 3-phosphate site. Catalysis depends on K192, which acts as the Proton acceptor. R256 contributes to the NADPH binding site. NADPH is bound by residues V280 and E282.

This sequence belongs to the NAD-dependent glycerol-3-phosphate dehydrogenase family.

Its subcellular location is the cytoplasm. The catalysed reaction is sn-glycerol 3-phosphate + NAD(+) = dihydroxyacetone phosphate + NADH + H(+). It catalyses the reaction sn-glycerol 3-phosphate + NADP(+) = dihydroxyacetone phosphate + NADPH + H(+). Its pathway is membrane lipid metabolism; glycerophospholipid metabolism. In terms of biological role, catalyzes the reduction of the glycolytic intermediate dihydroxyacetone phosphate (DHAP) to sn-glycerol 3-phosphate (G3P), the key precursor for phospholipid synthesis. The chain is Glycerol-3-phosphate dehydrogenase [NAD(P)+] from Staphylococcus epidermidis (strain ATCC 35984 / DSM 28319 / BCRC 17069 / CCUG 31568 / BM 3577 / RP62A).